The following is a 208-amino-acid chain: Small ribosomal subunit protein uS4 (208 aa).

The S4 RNA-binding domain occupies 98–161; sequence QRLDNVVFRM…KSNPQVVRAL (64 aa).

It belongs to the universal ribosomal protein uS4 family. In terms of assembly, part of the 30S ribosomal subunit. Contacts protein S5. The interaction surface between S4 and S5 is involved in control of translational fidelity.

Functionally, one of the primary rRNA binding proteins, it binds directly to 16S rRNA where it nucleates assembly of the body of the 30S subunit. Its function is as follows. With S5 and S12 plays an important role in translational accuracy. The sequence is that of Small ribosomal subunit protein uS4 from Aliarcobacter butzleri (strain RM4018) (Arcobacter butzleri).